Reading from the N-terminus, the 1956-residue chain is Sodium channel protein type 10 subunit alpha (1956 aa).

The Cytoplasmic portion of the chain corresponds to 1 to 125; that stretch reads MELPFASVGT…FNLIRRTAIK (125 aa). Positions 31–54 are disordered; sequence HRAAKKARTKHRGQEDKGEKPRPQ. The span at 32-41 shows a compositional bias: basic residues; the sequence is RAAKKARTKH. Residues 42–54 are compositionally biased toward basic and acidic residues; it reads RGQEDKGEKPRPQ. One copy of the I repeat lies at 116-404; that stretch reads FNLIRRTAIK…VTMAYEEQSQ (289 aa). Residues 126 to 149 traverse the membrane as a helical segment; it reads VSVHSWFSIFITITILVNCVCMTR. Residues 150–154 are Extracellular-facing; it reads TDLPE. The chain crosses the membrane as a helical span at residues 155–174; that stretch reads KVEYVFTVIYTFEALIKILA. At 175-187 the chain is on the cytoplasmic side; it reads RGFCLNEFTYLRD. The chain crosses the membrane as a helical span at residues 188-206; it reads PWNWLDFSVITLAYVGAAI. At 207 to 212 the chain is on the extracellular side; that stretch reads DLRGIS. The helical; Voltage-sensor transmembrane segment at 213-232 threads the bilayer; that stretch reads GLRTFRVLRALKTVSVIPGL. The Cytoplasmic portion of the chain corresponds to 233–248; sequence KVIVGALIHSVRKLAD. A helical membrane pass occupies residues 249–272; it reads VTILTVFCLSVFALVGLQLFKGNL. The Extracellular portion of the chain corresponds to 273-340; sequence KNKCIRNGTD…PDFNYTSFDS (68 aa). Cys-276 and Cys-318 are joined by a disulfide. N-linked (GlcNAc...) asparagine glycans are attached at residues Asn-279, Asn-288, Asn-311, and Asn-334. Residues 341-365 constitute an intramembrane region (pore-forming); sequence FAWAFLSLFRLMTQDSWERLYQQTL. Residues 366–372 lie on the Extracellular side of the membrane; sequence RASGKMY. A helical membrane pass occupies residues 373–398; that stretch reads MVFFVLVIFLGSFYLVNLILAVVTMA. The Cytoplasmic portion of the chain corresponds to 399–658; sequence YEEQSQATIA…KWRKFKMALF (260 aa). A phosphoserine mark is found at Ser-440, Ser-443, Ser-466, and Ser-478. Residues 441–453 are compositionally biased toward polar residues; it reads LQSHSGSPLASKN. Disordered stretches follow at residues 441-484 and 537-581; these read LQSH…YNQR and LLGR…AGAP. Positions 475–484 are enriched in polar residues; sequence SPQSDPYNQR. Phosphoserine is present on residues Ser-611 and Ser-614. The II repeat unit spans residues 646 to 910; that stretch reads CCPKWRKFKM…EDDGEVNNLQ (265 aa). The helical transmembrane segment at 659–683 threads the bilayer; it reads ELVTDPFAELTITLCIVVNTVFMAM. Residues 684-694 lie on the Extracellular side of the membrane; sequence EHYPMTDAFDA. Residues 695–718 traverse the membrane as a helical segment; sequence MLQAGNIVFTVFFTMEMAFKIIAF. At 719–726 the chain is on the cytoplasmic side; sequence DPYYYFQK. The helical transmembrane segment at 727–746 threads the bilayer; sequence KWNIFDCVIVTVSLLELSAS. The Extracellular segment spans residues 747–752; the sequence is KKGSLS. Residues 753–772 form a helical; Voltage-sensor membrane-spanning segment; that stretch reads VLRTFRLLRVFKLAKSWPTL. Residues 773–788 are Cytoplasmic-facing; the sequence is NTLIKIIGNSVGALGN. A helical transmembrane segment spans residues 789 to 809; the sequence is LTFILAIIVFIFALVGKQLLS. The Extracellular segment spans residues 810-833; the sequence is EDYGCRKDGVSVWNGEKLRWHMCD. Positions 834–854 form an intramembrane region, pore-forming; the sequence is FFHSFLVVFRILCGEWIENMW. The Extracellular segment spans residues 855-863; it reads VCMEVSQKS. Cys-856 and Cys-865 are disulfide-bonded. Residues 864 to 889 form a helical membrane-spanning segment; it reads ICLILFLTVMVLGNLVVLNLFIALLL. Topologically, residues 890–1148 are cytoplasmic; that stretch reads NSFSADNLTA…GWQVRKTCYR (259 aa). A disordered region spans residues 1008-1094; the sequence is DELEEDMEQA…SEGSTVDCPD (87 aa). One copy of the III repeat lies at 1141–1450; the sequence is QVRKTCYRIV…KKYYNAMKKL (310 aa). A helical transmembrane segment spans residues 1149 to 1172; that stretch reads IVEHSWFESFIIFMILLSSGALAF. Residues 1173–1185 are Extracellular-facing; sequence EDNYLEEKPRVKS. The chain crosses the membrane as a helical span at residues 1186 to 1211; it reads VLEYTDRVFTFIFVFEMLLKWVAYGF. Topologically, residues 1212–1217 are cytoplasmic; it reads KKYFTN. The helical transmembrane segment at 1218 to 1239 threads the bilayer; sequence AWCWLDFLIVNISLTSLIAKIL. The Extracellular portion of the chain corresponds to 1240–1243; sequence EYSD. A helical; Voltage-sensor membrane pass occupies residues 1244–1265; the sequence is VASIKALRTLRALRPLRALSRF. Residues 1266-1284 are Cytoplasmic-facing; sequence EGMRVVVDALVGAIPSIMN. The chain crosses the membrane as a helical span at residues 1285-1312; it reads VLLVCLIFWLIFSIMGVNLFAGKFSKCV. Over 1313–1354 the chain is Extracellular; that stretch reads DTRNNPFSNVNSTMVNNKSECHNQNSTGHFFWVNVKVNFDNV. N-linked (GlcNAc...) asparagine glycosylation is found at Asn-1323, Asn-1329, and Asn-1337. Residues 1355 to 1376 constitute an intramembrane region (pore-forming); it reads AMGYLALLQVATFKGWMDIMYA. Over 1377 to 1392 the chain is Extracellular; it reads AVDSGEINSQPNWENN. Residues 1393 to 1419 form a helical membrane-spanning segment; sequence LYMYLYFVVFIIFGGFFTLNLFVGVII. At 1420 to 1472 the chain is on the cytoplasmic side; the sequence is DNFNQQKKKLGGQDIFMTEEQKKYYNAMKKLGSKKPQKPIPRPLNKYQGFVFD. Ser-1452 bears the Phosphoserine; by PKC mark. The stretch at 1459–1758 is one IV repeat; it reads IPRPLNKYQG…WEKFDPEATQ (300 aa). The chain crosses the membrane as a helical span at residues 1473–1496; it reads IVTRQAFDIIIMVLICLNMITMMV. Over 1497–1507 the chain is Extracellular; that stretch reads ETDEQGEEKTK. Residues 1508 to 1531 traverse the membrane as a helical segment; that stretch reads VLGRINQFFVAVFTGECVMKMFAL. The Cytoplasmic portion of the chain corresponds to 1532-1537; that stretch reads RQYYFT. Residues 1538-1561 traverse the membrane as a helical segment; the sequence is NGWNVFDFIVVILSIGSLLFSAIL. Over 1562–1573 the chain is Extracellular; that stretch reads KSLENYFSPTLF. A helical; Voltage-sensor membrane pass occupies residues 1574 to 1595; sequence RVIRLARIGRILRLIRAAKGIR. At 1596–1610 the chain is on the cytoplasmic side; the sequence is TLLFALMMSLPALFN. A helical transmembrane segment spans residues 1611–1633; sequence IGLLLFLVMFIYSIFGMASFANV. The Extracellular portion of the chain corresponds to 1634–1647; the sequence is VDEAGIDDMFNFKT. An intramembrane region (pore-forming) is located at residues 1648 to 1670; it reads FGNSMLCLFQITTSAGWDGLLSP. The Extracellular segment spans residues 1671–1698; it reads ILNTGPPYCDPNLPNSNGSRGNCGSPAV. Asn-1687 is a glycosylation site (N-linked (GlcNAc...) asparagine). The helical transmembrane segment at 1699–1723 threads the bilayer; that stretch reads GIIFFTTYIIISFLIVVNMYIAVIL. The Cytoplasmic segment spans residues 1724 to 1956; sequence ENFNVATEES…AKEGNSPGPQ (233 aa). Residues 1852-1881 enclose the IQ domain; it reads EDLSATVIQKAYRSYMLHRSLTLSNTLHVP. The disordered stretch occupies residues 1906–1956; sequence DKSETASATSFPPSYDSVTRGLSDRANINPSSSMQNEDEVAAKEGNSPGPQ. Over residues 1931–1940 the composition is skewed to polar residues; the sequence is ANINPSSSMQ.

It belongs to the sodium channel (TC 1.A.1.10) family. Nav1.8/SCN10A subfamily. As to quaternary structure, the channel consists of an ion conducting pore forming alpha-subunit regulated by one or more associated auxiliary subunits SCN1B, SCN2B and SCN3B; electrophysiological properties may vary depending on the type of the associated beta subunits. Found in a number of complexes with PRX, DYNLT1 and PDZD2. Interacts with proteins such as FSTL1, PRX, DYNLT1, PDZD2, S100A10 and many others. Interacts with NEDD4 and NEDD4L. In terms of processing, ubiquitinated by NEDD4L; which promotes its endocytosis. Post-translationally, phosphorylation at Ser-1452 by PKC in a highly conserved cytoplasmic loop slows inactivation of the sodium channel and reduces peak sodium currents. Lacks the cysteine which covalently binds the conotoxin GVIIJ. This cysteine (position 815) is speculated in other sodium channel subunits alpha to be implied in covalent binding with the sodium channel subunit beta-2 or beta-4. As to expression, expressed in dorsal root ganglia, trigeminal ganglia, nodose ganglia and sciatic nerve.

The protein localises to the cell membrane. The enzyme catalyses Na(+)(in) = Na(+)(out). Functionally, tetrodotoxin-resistant channel that mediates the voltage-dependent sodium ion permeability of excitable membranes. Assuming opened or closed conformations in response to the voltage difference across the membrane, the protein forms a sodium-selective channel through which sodium ions may pass in accordance with their electrochemical gradient. Plays a role in neuropathic pain mechanisms. The protein is Sodium channel protein type 10 subunit alpha of Rattus norvegicus (Rat).